The following is a 118-amino-acid chain: uncharacterized protein (118 aa).

One can recognise an HTH hxlR-type domain in the interval 6–104 (CGFEVTKEVI…WGGYYAEQEY (99 aa)).

This is an uncharacterized protein from Bacillus subtilis (strain 168).